Consider the following 869-residue polypeptide: Leucine--tRNA ligase (869 aa).

The short motif at 42 to 52 (PYPSGKLHMGH) is the 'HIGH' region element. The short motif at 624–628 (TMSKS) is the 'KMSKS' region element. K627 serves as a coordination point for ATP.

This sequence belongs to the class-I aminoacyl-tRNA synthetase family.

The protein localises to the cytoplasm. It catalyses the reaction tRNA(Leu) + L-leucine + ATP = L-leucyl-tRNA(Leu) + AMP + diphosphate. In Nitrosomonas europaea (strain ATCC 19718 / CIP 103999 / KCTC 2705 / NBRC 14298), this protein is Leucine--tRNA ligase.